The sequence spans 465 residues: Cysteine--tRNA ligase (465 aa).

Cys-30 lines the Zn(2+) pocket. The 'HIGH' region signature appears at Ile-32–His-42. Zn(2+)-binding residues include Cys-214, His-239, and Glu-243. Positions Lys-271–Ser-275 match the 'KMSKS' region motif. Position 274 (Lys-274) interacts with ATP.

It belongs to the class-I aminoacyl-tRNA synthetase family. Monomer. It depends on Zn(2+) as a cofactor.

It is found in the cytoplasm. The catalysed reaction is tRNA(Cys) + L-cysteine + ATP = L-cysteinyl-tRNA(Cys) + AMP + diphosphate. The protein is Cysteine--tRNA ligase of Burkholderia thailandensis (strain ATCC 700388 / DSM 13276 / CCUG 48851 / CIP 106301 / E264).